A 585-amino-acid chain; its full sequence is Arginine--tRNA ligase (585 aa).

Positions 131–141 (ANPTGPMHVGH) match the 'HIGH' region motif.

Belongs to the class-I aminoacyl-tRNA synthetase family. In terms of assembly, monomer.

It is found in the cytoplasm. It carries out the reaction tRNA(Arg) + L-arginine + ATP = L-arginyl-tRNA(Arg) + AMP + diphosphate. The protein is Arginine--tRNA ligase of Allorhizobium ampelinum (strain ATCC BAA-846 / DSM 112012 / S4) (Agrobacterium vitis (strain S4)).